A 327-amino-acid polypeptide reads, in one-letter code: DNA-directed RNA polymerase subunit alpha (327 aa).

Positions 1–233 (MQNVLKSFLT…HQLAAFVDLK (233 aa)) are alpha N-terminal domain (alpha-NTD). Residues 247-327 (VNPLLLRPVE…GWPPADLTDQ (81 aa)) form an alpha C-terminal domain (alpha-CTD) region.

The protein belongs to the RNA polymerase alpha chain family. As to quaternary structure, homodimer. The RNAP catalytic core consists of 2 alpha, 1 beta, 1 beta' and 1 omega subunit. When a sigma factor is associated with the core the holoenzyme is formed, which can initiate transcription.

It catalyses the reaction RNA(n) + a ribonucleoside 5'-triphosphate = RNA(n+1) + diphosphate. Its function is as follows. DNA-dependent RNA polymerase catalyzes the transcription of DNA into RNA using the four ribonucleoside triphosphates as substrates. This Coxiella burnetii (strain CbuK_Q154) (Coxiella burnetii (strain Q154)) protein is DNA-directed RNA polymerase subunit alpha.